Here is a 310-residue protein sequence, read N- to C-terminus: Methionyl-tRNA formyltransferase (310 aa).

111–114 (SLLP) is a binding site for (6S)-5,6,7,8-tetrahydrofolate.

It belongs to the Fmt family.

It catalyses the reaction L-methionyl-tRNA(fMet) + (6R)-10-formyltetrahydrofolate = N-formyl-L-methionyl-tRNA(fMet) + (6S)-5,6,7,8-tetrahydrofolate + H(+). In terms of biological role, attaches a formyl group to the free amino group of methionyl-tRNA(fMet). The formyl group appears to play a dual role in the initiator identity of N-formylmethionyl-tRNA by promoting its recognition by IF2 and preventing the misappropriation of this tRNA by the elongation apparatus. The sequence is that of Methionyl-tRNA formyltransferase from Rhodopseudomonas palustris (strain TIE-1).